A 281-amino-acid polypeptide reads, in one-letter code: 4-diphosphocytidyl-2-C-methyl-D-erythritol kinase (281 aa).

The active site involves K15. An ATP-binding site is contributed by 98-108 (PTGAGLGGGSS). D140 is an active-site residue.

The protein belongs to the GHMP kinase family. IspE subfamily.

It carries out the reaction 4-CDP-2-C-methyl-D-erythritol + ATP = 4-CDP-2-C-methyl-D-erythritol 2-phosphate + ADP + H(+). Its pathway is isoprenoid biosynthesis; isopentenyl diphosphate biosynthesis via DXP pathway; isopentenyl diphosphate from 1-deoxy-D-xylulose 5-phosphate: step 3/6. Its function is as follows. Catalyzes the phosphorylation of the position 2 hydroxy group of 4-diphosphocytidyl-2C-methyl-D-erythritol. The sequence is that of 4-diphosphocytidyl-2-C-methyl-D-erythritol kinase from Neisseria meningitidis serogroup B (strain ATCC BAA-335 / MC58).